We begin with the raw amino-acid sequence, 319 residues long: Formimidoylglutamase (319 aa).

His131, Asp154, His156, Asp158, Cys248, and Asp250 together coordinate Mn(2+).

It belongs to the arginase family. It depends on Mn(2+) as a cofactor.

It carries out the reaction N-formimidoyl-L-glutamate + H2O = formamide + L-glutamate. The protein operates within amino-acid degradation; L-histidine degradation into L-glutamate; L-glutamate from N-formimidoyl-L-glutamate (hydrolase route): step 1/1. Catalyzes the conversion of N-formimidoyl-L-glutamate to L-glutamate and formamide. This Legionella pneumophila (strain Paris) protein is Formimidoylglutamase.